A 670-amino-acid chain; its full sequence is DNA ligase (670 aa).

NAD(+) contacts are provided by residues 35-39 (DSVYD), 84-85 (SL), and E116. Catalysis depends on K118, which acts as the N6-AMP-lysine intermediate. Residues R139, E176, K293, and K317 each coordinate NAD(+). Zn(2+)-binding residues include C411, C414, C429, and C435. The region spanning 592 to 670 (VVKSEIAGKT…EEAFLKLLKS (79 aa)) is the BRCT domain.

Belongs to the NAD-dependent DNA ligase family. LigA subfamily. Requires Mg(2+) as cofactor. Mn(2+) is required as a cofactor.

The enzyme catalyses NAD(+) + (deoxyribonucleotide)n-3'-hydroxyl + 5'-phospho-(deoxyribonucleotide)m = (deoxyribonucleotide)n+m + AMP + beta-nicotinamide D-nucleotide.. DNA ligase that catalyzes the formation of phosphodiester linkages between 5'-phosphoryl and 3'-hydroxyl groups in double-stranded DNA using NAD as a coenzyme and as the energy source for the reaction. It is essential for DNA replication and repair of damaged DNA. The protein is DNA ligase of Coxiella burnetii (strain RSA 331 / Henzerling II).